A 383-amino-acid chain; its full sequence is Acetylornithine deacetylase (383 aa).

Residue histidine 80 coordinates Zn(2+). Residue aspartate 82 is part of the active site. Position 112 (aspartate 112) interacts with Zn(2+). Glutamate 144 is an active-site residue. Residues glutamate 145, glutamate 169, and histidine 355 each contribute to the Zn(2+) site.

The protein belongs to the peptidase M20A family. ArgE subfamily. Homodimer. The cofactor is Zn(2+). Requires Co(2+) as cofactor. Glutathione serves as cofactor.

The protein localises to the cytoplasm. The catalysed reaction is N(2)-acetyl-L-ornithine + H2O = L-ornithine + acetate. Its pathway is amino-acid biosynthesis; L-arginine biosynthesis; L-ornithine from N(2)-acetyl-L-ornithine (linear): step 1/1. Its function is as follows. Catalyzes the hydrolysis of the amide bond of N(2)-acetylated L-amino acids. Cleaves the acetyl group from N-acetyl-L-ornithine to form L-ornithine, an intermediate in L-arginine biosynthesis pathway, and a branchpoint in the synthesis of polyamines. The polypeptide is Acetylornithine deacetylase (Shigella boydii serotype 4 (strain Sb227)).